The primary structure comprises 92 residues: Long neurotoxin 3FTx-Oxy1 (92 aa).

Residues 1–21 (MKTLLLTLVVVTIVCLDLGYT) form the signal peptide. Disulfide bonds link cysteine 24-cysteine 42, cysteine 35-cysteine 63, cysteine 48-cysteine 52, cysteine 67-cysteine 79, and cysteine 80-cysteine 85.

The protein belongs to the three-finger toxin family. Long-chain subfamily. Type II alpha-neurotoxin sub-subfamily. Expressed by the venom gland.

It is found in the secreted. Binds with high affinity to muscular (alpha-1/CHRNA1) and neuronal (alpha-7/CHRNA7) nicotinic acetylcholine receptor (nAChR) and inhibits acetylcholine from binding to the receptor, thereby impairing neuromuscular and neuronal transmission. The chain is Long neurotoxin 3FTx-Oxy1 from Oxyuranus microlepidotus (Inland taipan).